We begin with the raw amino-acid sequence, 125 residues long: Small ribosomal subunit protein uS12c (125 aa).

It belongs to the universal ribosomal protein uS12 family. Part of the 30S ribosomal subunit.

It is found in the plastid. Functionally, with S4 and S5 plays an important role in translational accuracy. Located at the interface of the 30S and 50S subunits. The polypeptide is Small ribosomal subunit protein uS12c (rps12) (Euglena longa (Euglenophycean alga)).